The following is a 551-amino-acid chain: Chaperonin GroEL 4 (551 aa).

ATP is bound by residues 30-33 (TLGP), lysine 51, 87-91 (DGTTT), glycine 415, and aspartate 495.

It belongs to the chaperonin (HSP60) family. As to quaternary structure, forms a cylinder of 14 subunits composed of two heptameric rings stacked back-to-back. Interacts with the co-chaperonin GroES.

It is found in the cytoplasm. The enzyme catalyses ATP + H2O + a folded polypeptide = ADP + phosphate + an unfolded polypeptide.. In terms of biological role, together with its co-chaperonin GroES, plays an essential role in assisting protein folding. The GroEL-GroES system forms a nano-cage that allows encapsulation of the non-native substrate proteins and provides a physical environment optimized to promote and accelerate protein folding. In Mesorhizobium japonicum (strain LMG 29417 / CECT 9101 / MAFF 303099) (Mesorhizobium loti (strain MAFF 303099)), this protein is Chaperonin GroEL 4.